A 77-amino-acid chain; its full sequence is Small integral membrane protein 5 (77 aa).

The helical transmembrane segment at 32 to 52 (IVAFSVIILFTATVLLLLLIA) threads the bilayer.

It localises to the membrane. This Homo sapiens (Human) protein is Small integral membrane protein 5 (SMIM5).